Reading from the N-terminus, the 433-residue chain is Adenylosuccinate synthetase (433 aa).

GTP-binding positions include 12 to 18 (GDEGKGK) and 40 to 42 (GHT). Aspartate 13 serves as the catalytic Proton acceptor. Mg(2+) is bound by residues aspartate 13 and glycine 40. IMP is bound by residues 13 to 16 (DEGK), 38 to 41 (NAGH), threonine 130, arginine 144, glutamine 225, threonine 240, and arginine 304. Histidine 41 serves as the catalytic Proton donor. 300 to 306 (ATTGRPR) lines the substrate pocket. GTP-binding positions include arginine 306, 332–334 (KLD), and 414–416 (SIG).

This sequence belongs to the adenylosuccinate synthetase family. In terms of assembly, homodimer. Mg(2+) is required as a cofactor.

It is found in the cytoplasm. The enzyme catalyses IMP + L-aspartate + GTP = N(6)-(1,2-dicarboxyethyl)-AMP + GDP + phosphate + 2 H(+). The protein operates within purine metabolism; AMP biosynthesis via de novo pathway; AMP from IMP: step 1/2. Functionally, plays an important role in the de novo pathway of purine nucleotide biosynthesis. Catalyzes the first committed step in the biosynthesis of AMP from IMP. This is Adenylosuccinate synthetase from Geobacter sulfurreducens (strain ATCC 51573 / DSM 12127 / PCA).